The sequence spans 189 residues: ATP synthase subunit delta (189 aa).

This sequence belongs to the ATPase delta chain family. In terms of assembly, F-type ATPases have 2 components, F(1) - the catalytic core - and F(0) - the membrane proton channel. F(1) has five subunits: alpha(3), beta(3), gamma(1), delta(1), epsilon(1). F(0) has three main subunits: a(1), b(2) and c(10-14). The alpha and beta chains form an alternating ring which encloses part of the gamma chain. F(1) is attached to F(0) by a central stalk formed by the gamma and epsilon chains, while a peripheral stalk is formed by the delta and b chains.

It is found in the cell inner membrane. In terms of biological role, f(1)F(0) ATP synthase produces ATP from ADP in the presence of a proton or sodium gradient. F-type ATPases consist of two structural domains, F(1) containing the extramembraneous catalytic core and F(0) containing the membrane proton channel, linked together by a central stalk and a peripheral stalk. During catalysis, ATP synthesis in the catalytic domain of F(1) is coupled via a rotary mechanism of the central stalk subunits to proton translocation. This protein is part of the stalk that links CF(0) to CF(1). It either transmits conformational changes from CF(0) to CF(1) or is implicated in proton conduction. This is ATP synthase subunit delta from Ehrlichia ruminantium (strain Gardel).